The sequence spans 334 residues: Glyceraldehyde-3-phosphate dehydrogenase (334 aa).

Residues 12 to 13 (TI) and Gly-111 each bind NAD(+). 140–142 (SCN) serves as a coordination point for D-glyceraldehyde 3-phosphate. Cys-141 acts as the Nucleophile in catalysis. Arg-167 provides a ligand contact to NAD(+). 192-193 (HG) is a D-glyceraldehyde 3-phosphate binding site. Gln-298 is an NAD(+) binding site.

The protein belongs to the glyceraldehyde-3-phosphate dehydrogenase family. As to quaternary structure, homotetramer.

The protein localises to the cytoplasm. It catalyses the reaction D-glyceraldehyde 3-phosphate + phosphate + NADP(+) = (2R)-3-phospho-glyceroyl phosphate + NADPH + H(+). The catalysed reaction is D-glyceraldehyde 3-phosphate + phosphate + NAD(+) = (2R)-3-phospho-glyceroyl phosphate + NADH + H(+). The protein operates within carbohydrate degradation; glycolysis; pyruvate from D-glyceraldehyde 3-phosphate: step 1/5. The polypeptide is Glyceraldehyde-3-phosphate dehydrogenase (Thermococcus sibiricus (strain DSM 12597 / MM 739)).